We begin with the raw amino-acid sequence, 275 residues long: NH(3)-dependent NAD(+) synthetase (275 aa).

ATP is bound at residue 47–54 (GISGGQDS). Residue aspartate 53 coordinates Mg(2+). Arginine 141 serves as a coordination point for deamido-NAD(+). Residue threonine 161 participates in ATP binding. Glutamate 166 serves as a coordination point for Mg(2+). Deamido-NAD(+) contacts are provided by lysine 174 and aspartate 181. Lysine 190 and threonine 212 together coordinate ATP. 261 to 262 (HK) lines the deamido-NAD(+) pocket.

This sequence belongs to the NAD synthetase family. Homodimer.

The enzyme catalyses deamido-NAD(+) + NH4(+) + ATP = AMP + diphosphate + NAD(+) + H(+). The protein operates within cofactor biosynthesis; NAD(+) biosynthesis; NAD(+) from deamido-NAD(+) (ammonia route): step 1/1. Functionally, catalyzes the ATP-dependent amidation of deamido-NAD to form NAD. Uses ammonia as a nitrogen source. The polypeptide is NH(3)-dependent NAD(+) synthetase (Enterococcus faecalis (strain ATCC 700802 / V583)).